Consider the following 152-residue polypeptide: Superoxide dismutase [Cu-Zn] (152 aa).

Residues H44, H46, and H61 each contribute to the Cu cation site. Zn(2+) is bound by residues H61, H69, H78, and D81. Residue H118 coordinates Cu cation.

The protein belongs to the Cu-Zn superoxide dismutase family. In terms of assembly, homodimer. Requires Cu cation as cofactor. It depends on Zn(2+) as a cofactor.

It is found in the cytoplasm. The catalysed reaction is 2 superoxide + 2 H(+) = H2O2 + O2. In terms of biological role, destroys radicals which are normally produced within the cells and which are toxic to biological systems. The chain is Superoxide dismutase [Cu-Zn] from Drosophila pseudoobscura pseudoobscura (Fruit fly).